A 266-amino-acid chain; its full sequence is Cell division cycle-associated protein 3 (266 aa).

The tract at residues 1–84 (MGSTQSVSGT…TPMKISGPDP (84 aa)) is disordered. Phosphoserine is present on residues serine 29 and serine 31. A compositionally biased stretch (polar residues) spans 32–46 (AGIQRTPIQVESSPQ). At threonine 37 the chain carries Phosphothreonine. Serine 44 and serine 67 each carry phosphoserine. Residue threonine 75 is modified to Phosphothreonine. An F-box-like region spans residues 90-119 (KELSEVLETEASESISSPELALPRETPLFY). Serine 93 bears the Phosphoserine mark. Disordered regions lie at residues 120–225 (DLDL…LSEN) and 242–266 (KAGGGAREPNQDHDKENQHFALLES). Residues 143–156 (LDPKQVFTKEEAKQ) show a composition bias toward basic and acidic residues. Residues 157–168 (SAETIAASQNSD) are compositionally biased toward polar residues. A Phosphoserine modification is found at serine 197. Phosphothreonine is present on threonine 200. The span at 203-213 (QDDNSPGTLTL) shows a compositional bias: polar residues. Serine 207 carries the phosphoserine modification. Threonine 210 carries the post-translational modification Phosphothreonine. The segment covering 250–259 (PNQDHDKENQ) has biased composition (basic and acidic residues). The KEN box motif lies at 256 to 258 (KEN).

As to quaternary structure, interacts with SKP1. Part of a SCF (SKP1-cullin-F-box) protein ligase complex. In terms of processing, ubiquitinated and degraded by the APC/C-Cdh1 complex.

Its subcellular location is the cytoplasm. It is found in the cytosol. It participates in protein modification; protein ubiquitination. Functionally, F-box-like protein which is required for entry into mitosis. Acts by participating in E3 ligase complexes that mediate the ubiquitination and degradation of WEE1 kinase at G2/M phase. In Mus musculus (Mouse), this protein is Cell division cycle-associated protein 3 (Cdca3).